The following is a 521-amino-acid chain: Endoplasmic reticulum mannosyl-oligosaccharide 1,2-alpha-mannosidase (521 aa).

Residues 1–8 (MVKRRTVK) are Cytoplasmic-facing. A helical; Signal-anchor for type II membrane protein transmembrane segment spans residues 9–31 (YFLRRILALFVLCVPIYYLYTTV). At 32 to 521 (QRPPGYTKLK…IENNMDLYTV (490 aa)) the chain is on the lumenal side. 5 N-linked (GlcNAc...) asparagine glycosylation sites follow: asparagine 114, asparagine 167, asparagine 300, asparagine 342, and asparagine 378. Cysteine 330 and cysteine 373 are joined by a disulfide. Glutamate 387 functions as the Proton donor in the catalytic mechanism. N-linked (GlcNAc...) asparagine glycosylation occurs at asparagine 499. Threonine 504 contacts Ca(2+).

Belongs to the glycosyl hydrolase 47 family. The cofactor is Ca(2+).

It localises to the membrane. It carries out the reaction N(4)-(alpha-D-Man-(1-&gt;2)-alpha-D-Man-(1-&gt;2)-alpha-D-Man-(1-&gt;3)-[alpha-D-Man-(1-&gt;2)-alpha-D-Man-(1-&gt;3)-[alpha-D-Man-(1-&gt;2)-alpha-D-Man-(1-&gt;6)]-alpha-D-Man-(1-&gt;6)]-beta-D-Man-(1-&gt;4)-beta-D-GlcNAc-(1-&gt;4)-beta-D-GlcNAc)-L-asparaginyl-[protein] (N-glucan mannose isomer 9A1,2,3B1,2,3) + 4 H2O = N(4)-(alpha-D-Man-(1-&gt;3)-[alpha-D-Man-(1-&gt;3)-[alpha-D-Man-(1-&gt;6)]-alpha-D-Man-(1-&gt;6)]-beta-D-Man-(1-&gt;4)-beta-D-GlcNAc-(1-&gt;4)-beta-D-GlcNAc)-L-asparaginyl-[protein] (N-glucan mannose isomer 5A1,2) + 4 beta-D-mannose. The catalysed reaction is N(4)-(alpha-D-Man-(1-&gt;2)-alpha-D-Man-(1-&gt;2)-alpha-D-Man-(1-&gt;3)-[alpha-D-Man-(1-&gt;3)-[alpha-D-Man-(1-&gt;2)-alpha-D-Man-(1-&gt;6)]-alpha-D-Man-(1-&gt;6)]-beta-D-Man-(1-&gt;4)-beta-D-GlcNAc-(1-&gt;4)-beta-D-GlcNAc)-L-asparaginyl-[protein] (N-glucan mannose isomer 8A1,2,3B1,3) + 3 H2O = N(4)-(alpha-D-Man-(1-&gt;3)-[alpha-D-Man-(1-&gt;3)-[alpha-D-Man-(1-&gt;6)]-alpha-D-Man-(1-&gt;6)]-beta-D-Man-(1-&gt;4)-beta-D-GlcNAc-(1-&gt;4)-beta-D-GlcNAc)-L-asparaginyl-[protein] (N-glucan mannose isomer 5A1,2) + 3 beta-D-mannose. It participates in protein modification; protein glycosylation. Its activity is regulated as follows. Inhibited by kifunensine. Its function is as follows. Involved in glycoprotein quality control as it is important for the targeting of misfolded glycoproteins for degradation. It trims a single alpha-1,2-linked mannose residue from Man(9)GlcNAc(2) to produce Man(8)GlcNAc(2) with low efficiency. The protein is Endoplasmic reticulum mannosyl-oligosaccharide 1,2-alpha-mannosidase of Schizosaccharomyces pombe (strain 972 / ATCC 24843) (Fission yeast).